Consider the following 120-residue polypeptide: Ribosome-binding factor A (120 aa).

This sequence belongs to the RbfA family. Monomer. Binds 30S ribosomal subunits, but not 50S ribosomal subunits or 70S ribosomes.

It localises to the cytoplasm. In terms of biological role, one of several proteins that assist in the late maturation steps of the functional core of the 30S ribosomal subunit. Associates with free 30S ribosomal subunits (but not with 30S subunits that are part of 70S ribosomes or polysomes). Required for efficient processing of 16S rRNA. May interact with the 5'-terminal helix region of 16S rRNA. The sequence is that of Ribosome-binding factor A from Chlamydia caviae (strain ATCC VR-813 / DSM 19441 / 03DC25 / GPIC) (Chlamydophila caviae).